A 122-amino-acid polypeptide reads, in one-letter code: uncharacterized protein (122 aa).

This sequence to B.subtilis YpdA.

This is an uncharacterized protein from Bacillus licheniformis.